The sequence spans 398 residues: MAAVQCLTFLFLFLLQNATSASPLPLFRRPIQSNHSNFVKHPRRSQVVFPVNHSSCDLFAGEWVRDETYPLYRSKECGRGIIDPGFDCQTYGRPDSDYLKFRWKPFNCNVPRFNGVKFLQEMRDKTIMFVGDSLGRNQWESLICMISSSAPSINTHIIHEDPLSTFKILDYNVKVSFYRAPYLVDIDKINGKTTLKLDEISVDASNAWRTADVLLFNTGHWWSHTGSLRGWEQMETGGRYYGDMDRLVALRKGLGTWSSWVLRYINSPLTRVFFLSVSPTHYNPNEWTSRSKTSTITQGGKSCYGQTTPFSGTTYPTSSYVNQKKVIDDVVKEMKSHVSLMDITMLSALRVDGHPSIYSGDLNPSLKRNPDRSSDCSHWCLPGLPDTWNQLFYAALLY.

A helical; Signal-anchor for type II membrane protein membrane pass occupies residues 1–21 (MAAVQCLTFLFLFLLQNATSA). Positions 131-133 (GDS) match the GDS motif motif. Residues 375–389 (DCSHWCLPGLPDTWN) carry the DCXHWCLPGXXDXWN motif motif.

The protein belongs to the PC-esterase family. TBL subfamily.

It is found in the membrane. Functionally, may act as a bridging protein that binds pectin and other cell wall polysaccharides. Probably involved in maintaining esterification of pectins. May be involved in the specific O-acetylation of cell wall polymers. In Arabidopsis thaliana (Mouse-ear cress), this protein is Protein trichome birefringence-like 45 (TBL45).